The primary structure comprises 71 residues: Small ribosomal subunit protein bS21 (71 aa).

Residues 43–71 are disordered; the sequence is TERKRAKASAVKRHAKKLARENARRTRLY. Basic residues predominate over residues 46–59; that stretch reads KRAKASAVKRHAKK. Over residues 60-71 the composition is skewed to basic and acidic residues; sequence LARENARRTRLY.

Belongs to the bacterial ribosomal protein bS21 family.

In Pectobacterium atrosepticum (strain SCRI 1043 / ATCC BAA-672) (Erwinia carotovora subsp. atroseptica), this protein is Small ribosomal subunit protein bS21.